Reading from the N-terminus, the 37-residue chain is MKVQPSVKRICRNCKVIRRKGVVRIICKDPRHKQRQG.

The protein belongs to the bacterial ribosomal protein bL36 family.

The protein is Large ribosomal subunit protein bL36 of Dechloromonas aromatica (strain RCB).